A 259-amino-acid polypeptide reads, in one-letter code: MTFPNINPIIFSIGPLAISWYSLSYVIGILLGWFYANKIIEKFKPQITKKNLEDFITYAVIGIIVGGRLGFVLLYNPSRYFSNPIDILKTYEGGMSFHGGALGGIITAYLFCRKYKINFLSLTDIIAPVVPIGLFLGRIANFINGELYGRITNSSFGMIFPNSDLMPRHPSQLYEAFFEGLVLFSILAYTTFKHKTLKKCGLNSGIFFTFYGLFRITIEIFREPDIQIGFILDSLTMGQILSVPMLLLGGYLICQSNPK.

The next 4 membrane-spanning stretches (helical) occupy residues Ile9–Ile29, Phe55–Tyr75, Glu92–Cys112, and Ile117–Gly137. Arg138 is an a 1,2-diacyl-sn-glycero-3-phospho-(1'-sn-glycerol) binding site. The next 3 membrane-spanning stretches (helical) occupy residues Gln172–Phe192, Gly201–Phe221, and Ile228–Leu248.

It belongs to the Lgt family.

The protein localises to the cell inner membrane. The catalysed reaction is L-cysteinyl-[prolipoprotein] + a 1,2-diacyl-sn-glycero-3-phospho-(1'-sn-glycerol) = an S-1,2-diacyl-sn-glyceryl-L-cysteinyl-[prolipoprotein] + sn-glycerol 1-phosphate + H(+). Its pathway is protein modification; lipoprotein biosynthesis (diacylglyceryl transfer). Functionally, catalyzes the transfer of the diacylglyceryl group from phosphatidylglycerol to the sulfhydryl group of the N-terminal cysteine of a prolipoprotein, the first step in the formation of mature lipoproteins. The chain is Phosphatidylglycerol--prolipoprotein diacylglyceryl transferase from Rickettsia africae (strain ESF-5).